Consider the following 122-residue polypeptide: MADLKQFAEQLVNLTVKEVNDLATILKDEYGIEPAAAAVVMQAGGGEAAEEAQTEFTVVLKEAGASKLAVVKAVKELTGLGLKEAKDLVDAAPSNVKEGVSKDEAEGLKKSLEEAGAVVELK.

This sequence belongs to the bacterial ribosomal protein bL12 family. Homodimer. Part of the ribosomal stalk of the 50S ribosomal subunit. Forms a multimeric L10(L12)X complex, where L10 forms an elongated spine to which 2 to 4 L12 dimers bind in a sequential fashion. Binds GTP-bound translation factors.

Functionally, forms part of the ribosomal stalk which helps the ribosome interact with GTP-bound translation factors. Is thus essential for accurate translation. The polypeptide is Large ribosomal subunit protein bL12 (Flavobacterium psychrophilum (strain ATCC 49511 / DSM 21280 / CIP 103535 / JIP02/86)).